The following is a 388-amino-acid chain: Putative N(4)-(beta-N-acetylglucosaminyl)-L-asparaginase GL17147 (388 aa).

The signal sequence occupies residues Met1–Thr20. 2 cysteine pairs are disulfide-bonded: Cys94–Cys99 and Cys193–Cys209. Thr240 (nucleophile) is an active-site residue. Residues Arg268–Asp271 and Thr291–Gly294 contribute to the substrate site. Cysteines 351 and 378 form a disulfide.

The protein belongs to the Ntn-hydrolase family. As to quaternary structure, heterotetramer of two alpha and two beta chains arranged as a dimer of alpha/beta heterodimers. In terms of processing, cleaved into an alpha and beta chain by autocatalysis; this activates the enzyme. The N-terminal residue of the beta subunit is responsible for the nucleophile hydrolase activity.

The catalysed reaction is N(4)-(beta-N-acetyl-D-glucosaminyl)-L-asparagine + H2O = N-acetyl-beta-D-glucosaminylamine + L-aspartate + H(+). In terms of biological role, cleaves the GlcNAc-Asn bond which joins oligosaccharides to the peptide of asparagine-linked glycoproteins. This chain is Putative N(4)-(beta-N-acetylglucosaminyl)-L-asparaginase GL17147, found in Drosophila persimilis (Fruit fly).